Reading from the N-terminus, the 1336-residue chain is Vascular endothelial growth factor receptor 1 (1336 aa).

The N-terminal stretch at 1-22 (MVSCWDTAVLPCALLGCLLLTG) is a signal peptide. Residues 23-758 (YCSGSKLKGP…QGTSDKSNLE (736 aa)) are Extracellular-facing. Ig-like C2-type domains lie at 32–121 (PELS…KKME), 151–214 (GREL…VNGH), 230–327 (LDVQ…TSVH), 335–421 (SVKH…LTAT), 429–549 (QIYE…RDIR), 556–655 (PNGF…EVLV), and 661–747 (PLLL…AYLT). Cystine bridges form between cysteine 53–cysteine 107 and cysteine 158–cysteine 207. N-linked (GlcNAc...) asparagine glycosylation is found at asparagine 100, asparagine 164, asparagine 196, and asparagine 251. Cysteines 252 and 311 form a disulfide. N-linked (GlcNAc...) asparagine glycosylation is found at asparagine 323, asparagine 417, asparagine 474, asparagine 516, asparagine 597, asparagine 625, asparagine 666, and asparagine 713. Cystine bridges form between cysteine 454–cysteine 535 and cysteine 577–cysteine 636. Cysteine 682 and cysteine 731 are joined by a disulfide. The helical transmembrane segment at 759–780 (LITLTCTCVAATLFWLLLTLFI) threads the bilayer. The Cytoplasmic portion of the chain corresponds to 781–1336 (RKLKRSSSEV…SVVLYSSPPA (556 aa)). The Protein kinase domain maps to 827–1158 (LKLGKSLGRG…ELVEKLGDLL (332 aa)). ATP is bound by residues 833-841 (LGRGAFGKV) and lysine 861. Tyrosine 914 is subject to Phosphotyrosine; by autocatalysis. Basic and acidic residues predominate over residues 941–957 (KKEKLEPDLEQDQKPRL). The tract at residues 941–982 (KKEKLEPDLEQDQKPRLDSVSSSESFTSSGFQEDKSVSDVEG) is disordered. The span at 959-969 (SVSSSESFTSS) shows a compositional bias: low complexity. Catalysis depends on aspartate 1022, which acts as the Proton acceptor. Residues tyrosine 1053, tyrosine 1169, tyrosine 1213, tyrosine 1242, tyrosine 1325, and tyrosine 1331 each carry the phosphotyrosine; by autocatalysis modification. The tract at residues 1304-1326 (RQEDEDDPELGKESCCSPPPDYN) is disordered.

This sequence belongs to the protein kinase superfamily. Tyr protein kinase family. CSF-1/PDGF receptor subfamily. As to quaternary structure, interacts with VEGFA, VEGFB and PGF. Monomer in the absence of bound VEGFA, VEGFB or PGF. Homodimer in the presence of bound VEGFA, VEGFB and PGF. Can also form a heterodimer with KDR. Interacts (tyrosine phosphorylated) with CBL, CRK, GRB2, NCK1, PIK3R1, PLCG, PSEN1 and PTPN11. Probably interacts with PTPRB. Interacts with RACK1. Identified in a complex with CBL and CD2AP. In terms of processing, N-glycosylated. Ubiquitinated after VEGFA-mediated autophosphorylation, leading to proteolytic degradation. Post-translationally, autophosphorylated on tyrosine residues upon ligand binding. Autophosphorylation occurs in trans, i.e. one subunit of the dimeric receptor phosphorylates tyrosine residues on the other subunit. Phosphorylation at Tyr-1169 is important for interaction with PLCG. Phosphorylation at Tyr-1213 is important for interaction with PIK3R1, PTPN11, GRB2, and PLCG. Phosphorylation at Tyr-1331 is important for endocytosis and for interaction with CBL, NCK1 and CRK. Is probably dephosphorylated by PTPRB.

The protein localises to the cell membrane. The protein resides in the endosome. The catalysed reaction is L-tyrosyl-[protein] + ATP = O-phospho-L-tyrosyl-[protein] + ADP + H(+). Present in an inactive conformation in the absence of bound ligand. Binding of VEGFA, VEGFB or PGF leads to dimerization and activation by autophosphorylation on tyrosine residues. Tyrosine-protein kinase that acts as a cell-surface receptor for VEGFA, VEGFB and PGF, and plays an essential role in the development of embryonic vasculature, the regulation of angiogenesis, cell survival, cell migration, macrophage function, chemotaxis, and cancer cell invasion. Acts as a positive regulator of postnatal retinal hyaloid vessel regression. May play an essential role as a negative regulator of embryonic angiogenesis by inhibiting excessive proliferation of endothelial cells. Can promote endothelial cell proliferation, survival and angiogenesis in adulthood. Its function in promoting cell proliferation seems to be cell-type specific. Promotes PGF-mediated proliferation of endothelial cells, and proliferation of some types of cancer cells, but does not promote proliferation of normal fibroblasts. Has very high affinity for VEGFA and relatively low protein kinase activity; may function as a negative regulator of VEGFA signaling by limiting the amount of free VEGFA and preventing its binding to KDR. Modulates KDR signaling by forming heterodimers with KDR. Ligand binding leads to the activation of several signaling cascades. Activation of PLCG leads to the production of the cellular signaling molecules diacylglycerol and inositol 1,4,5-trisphosphate and the activation of protein kinase C. Mediates phosphorylation of PIK3R1, the regulatory subunit of phosphatidylinositol 3-kinase, leading to the activation of phosphatidylinositol kinase and the downstream signaling pathway. Mediates activation of MAPK1/ERK2, MAPK3/ERK1 and the MAP kinase signaling pathway, as well as of the AKT1 signaling pathway. Phosphorylates SRC, YES1 and PLCG, and may also phosphorylate CBL. Promotes phosphorylation of AKT1 and PTK2/FAK1. The polypeptide is Vascular endothelial growth factor receptor 1 (Flt1) (Rattus norvegicus (Rat)).